Here is a 499-residue protein sequence, read N- to C-terminus: Putative DBH-like monooxygenase protein 2 (499 aa).

The N-terminal stretch at 1–16 is a signal peptide; the sequence is MAHDLLFRLFPLLALG. In terms of domain architecture, DOMON spans 40–156; it reads NVIFLRWDFD…NTVRVLAAYG (117 aa). Tyr-209 is a catalytic residue. Cystine bridges form between Cys-211/Cys-261 and Cys-248/Cys-271. Residue Asn-236 is glycosylated (N-linked (GlcNAc...) asparagine). Cu cation contacts are provided by His-241 and His-242. Residue Asn-250 is glycosylated (N-linked (GlcNAc...) asparagine). 3 residues coordinate Cu cation: His-308, His-389, and His-391. Disulfide bonds link Cys-365–Cys-480 and Cys-443–Cys-465. His-389 is a catalytic residue. The N-linked (GlcNAc...) asparagine glycan is linked to Asn-404. Met-464 is a Cu cation binding site. N-linked (GlcNAc...) asparagine glycosylation is present at Asn-476.

Belongs to the copper type II ascorbate-dependent monooxygenase family. Cu(2+) serves as cofactor.

The chain is Putative DBH-like monooxygenase protein 2 (MOXD2P) from Homo sapiens (Human).